The sequence spans 141 residues: Small ribosomal subunit protein uS9c (141 aa).

Belongs to the universal ribosomal protein uS9 family.

The protein localises to the plastid. It is found in the chloroplast. This chain is Small ribosomal subunit protein uS9c (rps9), found in Tupiella akineta (Green alga).